Here is a 142-residue protein sequence, read N- to C-terminus: Heat shock protein HSP.16.4 (142 aa).

One can recognise a sHSP domain in the interval 27-142 (NLFNDLKSNL…KEIKTSIPIE (116 aa)).

It belongs to the small heat shock protein (HSP20) family.

It localises to the cytoplasm. The protein is Heat shock protein HSP.16.4 of Streptococcus thermophilus.